The sequence spans 460 residues: Flavin-containing monooxygenase FMO GS-OX-like 9 (460 aa).

Residue 20 to 25 participates in FAD binding; sequence GAGPAG. NADP(+) is bound at residue 222 to 227; sequence GNSMSG.

It belongs to the FMO family. FAD serves as cofactor.

In terms of biological role, catalyzes the conversion of methylthioalkyl glucosinolates of any chain length into methylsulfinylalkyl glucosinolates. This is Flavin-containing monooxygenase FMO GS-OX-like 9 from Arabidopsis thaliana (Mouse-ear cress).